The chain runs to 148 residues: Snaclec stejaggregin-A subunit beta-3 (148 aa).

Positions 1-23 (MGRFISVSFGLLVVFLSLSGAGA) are cleaved as a signal peptide. Cys27 and Cys38 are joined by a disulfide. The C-type lectin domain maps to 34 to 145 (YDLYCYKVFK…CSRTHYVVCK (112 aa)). Asn47 and Asn78 each carry an N-linked (GlcNAc...) asparagine glycan. 2 cysteine pairs are disulfide-bonded: Cys55-Cys144 and Cys121-Cys136.

This sequence belongs to the snaclec family. In terms of assembly, heteromultimer; disulfide-linked. As to expression, expressed by the venom gland.

It is found in the secreted. Functionally, interferes with one step of hemostasis (modulation of platelet aggregation, or coagulation cascade, for example). In Trimeresurus stejnegeri (Chinese green tree viper), this protein is Snaclec stejaggregin-A subunit beta-3.